Here is a 412-residue protein sequence, read N- to C-terminus: Gamma-glutamyl phosphate reductase (412 aa).

This sequence belongs to the gamma-glutamyl phosphate reductase family.

It localises to the cytoplasm. The catalysed reaction is L-glutamate 5-semialdehyde + phosphate + NADP(+) = L-glutamyl 5-phosphate + NADPH + H(+). Its pathway is amino-acid biosynthesis; L-proline biosynthesis; L-glutamate 5-semialdehyde from L-glutamate: step 2/2. In terms of biological role, catalyzes the NADPH-dependent reduction of L-glutamate 5-phosphate into L-glutamate 5-semialdehyde and phosphate. The product spontaneously undergoes cyclization to form 1-pyrroline-5-carboxylate. The protein is Gamma-glutamyl phosphate reductase of Actinobacillus pleuropneumoniae serotype 5b (strain L20).